We begin with the raw amino-acid sequence, 403 residues long: Argininosuccinate synthase (403 aa).

Residue 9-17 participates in ATP binding; the sequence is AYSGGLDTS. Position 86 (Y86) interacts with L-citrulline. G116 provides a ligand contact to ATP. The L-aspartate site is built by T118, N122, and D123. N122 is a binding site for L-citrulline. 5 residues coordinate L-citrulline: R126, S174, S183, E259, and Y271.

Belongs to the argininosuccinate synthase family. Type 1 subfamily. In terms of assembly, homotetramer.

It is found in the cytoplasm. The catalysed reaction is L-citrulline + L-aspartate + ATP = 2-(N(omega)-L-arginino)succinate + AMP + diphosphate + H(+). It functions in the pathway amino-acid biosynthesis; L-arginine biosynthesis; L-arginine from L-ornithine and carbamoyl phosphate: step 2/3. The polypeptide is Argininosuccinate synthase (Shouchella clausii (strain KSM-K16) (Alkalihalobacillus clausii)).